A 55-amino-acid chain; its full sequence is MAKGIREKIKLVSSAGTGHFYTTTKNKRTKPEKLELKKFDPVVRQHVIYKEAKIK.

The protein belongs to the bacterial ribosomal protein bL33 family.

The polypeptide is Large ribosomal subunit protein bL33 (Escherichia coli (strain K12 / DH10B)).